Here is a 460-residue protein sequence, read N- to C-terminus: MAEKKMWGGRFKQGTATLVEEYTESVSYDRALYAQDIAGSMAHARMLARQGVLTAEEAAIIVDGLATVRSEIEAGSFVWRREFEDVHMNIENRLTELVGDVGKKLHTGRSRNDQVALDFRLFVSDRVRVWRELGRDLVGVIVDQARQHTATLLPGCTHMQPAQPVSLAQHLLAYAWMLRRDIDRLEDCDKRARVCPLGAAALAGTTYPLDPASVADELGMYGTFRNSMDAVSDRDFVLEALFDGSVIMAHLSRLCEEFILWANPAFGYIFLPDAYATGSSIMPQKKNPDVAELMRGKTGRVYGALTTMLTTVKGLPMTYNRDLQEDKEPFIDADRTVSASLEIMAGMLREVRFNTARMRTALRSGFLNATELADYLVGKGIPFREAHHLTGAAVALAEEKGVTLEELPLEDYRGICDRIDEDVYPILEPEAAVSRRETPGGTGPRSVAAQIAELDSWLGR.

It belongs to the lyase 1 family. Argininosuccinate lyase subfamily.

It localises to the cytoplasm. The catalysed reaction is 2-(N(omega)-L-arginino)succinate = fumarate + L-arginine. Its pathway is amino-acid biosynthesis; L-arginine biosynthesis; L-arginine from L-ornithine and carbamoyl phosphate: step 3/3. The polypeptide is Argininosuccinate lyase (Nitratidesulfovibrio vulgaris (strain ATCC 29579 / DSM 644 / CCUG 34227 / NCIMB 8303 / VKM B-1760 / Hildenborough) (Desulfovibrio vulgaris)).